The following is an 85-amino-acid chain: N.vectensis toxin 1 4 (85 aa).

Positions 1 to 20 (MASFKIVIVCLALLVAVASA) are cleaved as a signal peptide. The propeptide occupies 21–36 (RRRDMMSDDELDYHYS). Cystine bridges form between Cys-42/Cys-82, Cys-44/Cys-72, and Cys-65/Cys-83.

This sequence belongs to the sea anemone sodium channel inhibitory toxin family. Type II subfamily. Expressed in ectodermal glands and in clumps outside of the extodermal layer. Is not expressed in nematocytes. In adult female tissues, shows similar expression levels in mesenteries (gametes-producing tissue), tentacles, pharynx and physa.

It is found in the secreted. In terms of biological role, binds to site 3 of voltage-gated sodium channels and inhibits the inactivation process. Is highly active on DmNav1/TipE (drosophila) and is only extremely weakly active on rat Nav1.4-beta-1/SCN4A-SCN1B, and on human Nav1.5-beta-1/SCN5A-beta-1. This reveals high specificity for arthropod over mammalian channels. In vivo, when released into the medium, this recombinant toxin induces impaired swimming, paralysis and death of the crustacean A.nauplii within several hours. Also causes paralysis of cherry shrimps immediately after injection at very low doses. Its effect on zebrafish (D.rerio) larvae is also rapid, since it induces tail twitching accompanied by impaired swimming after 20 minutes and complete paralysis within 45 minutes. It has also been observed to cause death of zebrafish larvae within 1 hour. This is N.vectensis toxin 1 4 from Nematostella vectensis (Starlet sea anemone).